Reading from the N-terminus, the 259-residue chain is Tegument protein UL51 homolog (259 aa).

Residue Cys9 is the site of S-palmitoyl cysteine; by host attachment.

The protein belongs to the herpesviridae UL51 family. In terms of assembly, oligomerizes. Interacts with ORF53; this interaction mediates ORF53 incorporation to virions. Phosphorylated. In terms of processing, palmitoylation is necessary for Golgi localization.

It localises to the virion tegument. The protein localises to the host cytoplasm. The protein resides in the host Golgi apparatus. In terms of biological role, plays several roles during the time course of infection, including egress of virus particles from the perinuclear space and secondary envelopment of cytoplasmic capsids that bud into specific trans-Golgi network (TGN)-derived membranes. This is Tegument protein UL51 homolog from Varicella-zoster virus (strain Dumas) (HHV-3).